The primary structure comprises 966 residues: C4 phosphoenolpyruvate carboxylase (966 aa).

Phosphoserine is present on Ser-11. The active site involves His-172. D-glucose 6-phosphate is bound by residues Trp-283, Arg-450, and Asp-597. Lys-600 is a catalytic residue. D-glucose 6-phosphate is bound at residue Arg-635. The active site involves Arg-641. Arg-641 lines the L-aspartate pocket. Position 665 (Thr-665) interacts with D-glucose 6-phosphate. Gln-673 is a binding site for L-aspartate. Residues Arg-753 and 767–769 (RAI) contribute to the D-glucose 6-phosphate site. L-aspartate contacts are provided by Lys-829, Arg-888, and Asn-964.

Belongs to the PEPCase type 1 family. As to quaternary structure, homotetramer. Requires Mg(2+) as cofactor. In terms of tissue distribution, expressed in mesophyll cells, but not in bundle-sheath, roots, stems and flowers.

It localises to the cytoplasm. The catalysed reaction is oxaloacetate + phosphate = phosphoenolpyruvate + hydrogencarbonate. The protein operates within photosynthesis; C4 acid pathway. With respect to regulation, 5 fold activation by the allosteric regulator glucose-6-phosphate. Low sensitivity to inhibition by L-malate and L-aspartate. Up-regulated by light-reversible phosphorylation. Functionally, forms oxaloacetate through the carboxylation of phosphoenolpyruvate (PEP). Catalyzes the first step of C4 photosynthesis. In Flaveria trinervia (Clustered yellowtops), this protein is C4 phosphoenolpyruvate carboxylase.